The following is a 135-amino-acid chain: Biglycan (135 aa).

5 LRR repeats span residues 4 to 24, 25 to 46, 49 to 72, 73 to 95, and 96 to 117; these read KLNY…DLPE, TLNE…DLLR, KLYR…SFLP, TLRE…PDLK, and LLQV…DFCP. A glycan (N-linked (GlcNAc...) asparagine) is linked at N65. Residue N106 is glycosylated (N-linked (GlcNAc...) asparagine).

The protein belongs to the small leucine-rich proteoglycan (SLRP) family. SLRP class I subfamily. In terms of assembly, homodimer. Forms a ternary complex with MFAP2 and ELN. Post-translationally, the two attached glycosaminoglycan chains can be either chondroitin sulfate or dermatan sulfate. Found in several connective tissues, especially in articular cartilages.

Its subcellular location is the secreted. The protein resides in the extracellular space. The protein localises to the extracellular matrix. In terms of biological role, may be involved in collagen fiber assembly. The protein is Biglycan (BGN) of Oryctolagus cuniculus (Rabbit).